A 229-amino-acid chain; its full sequence is MISLRIHEQPIHDQPRERLARQGAGALSDAELLAILLRVGTNGTNVLQLAQQLLAESGGLQGLQRLDFQELCRLHGMGVSKAASVKAALEIGRRLARSAIEERFPIRSPADVATLLLVEMSHLDQEHLRTILLDTKNRVQQITTVYIGSLNSANVRVGEVFKEAVRRNSAAIIVVHNHPSGEPTPSMEDIEITRQLVSAGRLLDIEVVDHLIIGNGRYVSLRERGLGFE.

The 123-residue stretch at 105 to 227 folds into the MPN domain; it reads PIRSPADVAT…YVSLRERGLG (123 aa). Positions 176, 178, and 189 each coordinate Zn(2+). Positions 176–189 match the JAMM motif motif; the sequence is HNHPSGEPTPSMED.

Belongs to the UPF0758 family.

This is UPF0758 protein Caur_3603 from Chloroflexus aurantiacus (strain ATCC 29366 / DSM 635 / J-10-fl).